A 145-amino-acid polypeptide reads, in one-letter code: Putative esterase PA1618 (145 aa).

Belongs to the thioesterase PaaI family.

The sequence is that of Putative esterase PA1618 from Pseudomonas aeruginosa (strain ATCC 15692 / DSM 22644 / CIP 104116 / JCM 14847 / LMG 12228 / 1C / PRS 101 / PAO1).